The chain runs to 487 residues: Zinc finger and BTB domain-containing protein 32 (487 aa).

The BTB domain occupies 29–87 (CDTLITVGGQEFPAHSLVLAGVSQQLGRRGQWALGEGISPSTFAQLLNFVYGESVELQP). Residues 113 to 166 (RGDRAKKPDPGLKKHQEEPEKPSRNAERELGDPGEKQKPEQVSRTGGREQEMLH) are compositionally biased toward basic and acidic residues. 2 disordered regions span residues 113–208 (RGDR…ADGK) and 308–371 (QNQL…ARSR). Polar residues predominate over residues 308 to 320 (QNQLASSSPTPGS). Residues 357–369 (PPRPHPPPAPPAR) are compositionally biased toward pro residues. 3 consecutive C2H2-type zinc fingers follow at residues 373–395 (YACS…YRVH), 401–423 (FSCS…LRTH), and 428–450 (YRXX…MRGH). A disordered region spans residues 468–487 (SSSRPSRPSTSPCCPSSSTT).

This sequence belongs to the krueppel C2H2-type zinc-finger protein family. Homodimer (via PTB domain). Interacts with the N-terminal of FANCC. Interacts with ZBTB16. Interacts with GATA3.

It localises to the nucleus. Its function is as follows. DNA-binding protein that binds to the to a 5'-TGTACAGTGT-3' core sequence. May function as a transcriptional transactivator and transcriptional repressor. Probably exerts its repressor effect by preventing GATA3 from binding to DNA. May play a role in regulating the differentiation and activation of helper T-cells. The sequence is that of Zinc finger and BTB domain-containing protein 32 (ZBTB32) from Pan troglodytes (Chimpanzee).